The primary structure comprises 245 residues: NAD-dependent protein deacylase 1 (245 aa).

The Deacetylase sirtuin-type domain occupies 1–243 (MDEKLLKTIA…DELVRHVRKA (243 aa)). 20-39 (GAGVSAESGIPTFRGKDGLW) is a binding site for NAD(+). The substrate site is built by Y64 and R67. Residue 98–101 (QNVD) coordinates NAD(+). H116 serves as the catalytic Proton acceptor. C124, C127, C145, and C148 together coordinate Zn(2+). NAD(+) contacts are provided by residues 185–187 (GTS), 211–213 (NPD), and A229.

This sequence belongs to the sirtuin family. Class III subfamily. The cofactor is Zn(2+).

The protein resides in the cytoplasm. The catalysed reaction is N(6)-acetyl-L-lysyl-[protein] + NAD(+) + H2O = 2''-O-acetyl-ADP-D-ribose + nicotinamide + L-lysyl-[protein]. The enzyme catalyses N(6)-succinyl-L-lysyl-[protein] + NAD(+) + H2O = 2''-O-succinyl-ADP-D-ribose + nicotinamide + L-lysyl-[protein]. Functionally, NAD-dependent lysine deacetylase and desuccinylase that specifically removes acetyl and succinyl groups on target proteins. Modulates the activities of several proteins which are inactive in their acylated form. Deacetylates the N-terminal lysine residue of Alba, the major archaeal chromatin protein and that, in turn, increases Alba's DNA binding affinity, thereby repressing transcription. This is NAD-dependent protein deacylase 1 from Archaeoglobus fulgidus (strain ATCC 49558 / DSM 4304 / JCM 9628 / NBRC 100126 / VC-16).